The chain runs to 189 residues: MFDEQAIKQSVQNMLLAIGEDPEREGLKETPRRVAQMYAELFSGMNQDPAEVLRVGYELGHREMVIIKDIPFYSMCEHHLLPFSGVVHIGYIPNIDGRVVGISKLARVVEIYAKRPQIQERMATQIADAIIDGLKCDGVAVVIEAEHMCMVMRGIKKPGSRVITSALRGSFHKSPAARAEFLSLIQQKH.

Zn(2+) contacts are provided by C76, H79, and C149.

Belongs to the GTP cyclohydrolase I family. Toroid-shaped homodecamer, composed of two pentamers of five dimers.

The catalysed reaction is GTP + H2O = 7,8-dihydroneopterin 3'-triphosphate + formate + H(+). The protein operates within cofactor biosynthesis; 7,8-dihydroneopterin triphosphate biosynthesis; 7,8-dihydroneopterin triphosphate from GTP: step 1/1. In Dehalococcoides mccartyi (strain ATCC BAA-2266 / KCTC 15142 / 195) (Dehalococcoides ethenogenes (strain 195)), this protein is GTP cyclohydrolase 1.